Consider the following 65-residue polypeptide: Large ribosomal subunit protein bL35 (65 aa).

The span at 1–15 shows a compositional bias: basic residues; that stretch reads MPKMKTKSSAKKRFS. Positions 1 to 21 are disordered; the sequence is MPKMKTKSSAKKRFSIRAGGS.

Belongs to the bacterial ribosomal protein bL35 family.

This Dechloromonas aromatica (strain RCB) protein is Large ribosomal subunit protein bL35.